We begin with the raw amino-acid sequence, 344 residues long: Flavonoid 7-O-methyltransferase 1B (344 aa).

Position 211 (Asp-211) interacts with S-adenosyl-L-methionine. Residue His-249 is the Proton acceptor of the active site.

The protein belongs to the class I-like SAM-binding methyltransferase superfamily. Cation-independent O-methyltransferase family. Homodimer.

It catalyses the reaction scutellarein + S-adenosyl-L-methionine = scutellarein 7-methyl ether + S-adenosyl-L-homocysteine. The catalysed reaction is 4',7,8-trihydroxyflavone + S-adenosyl-L-methionine = 4',8-dihydroxy-7-methoxyflavone + S-adenosyl-L-homocysteine. The enzyme catalyses isorhamnetin + S-adenosyl-L-methionine = rhamnacene + S-adenosyl-L-homocysteine + H(+). It carries out the reaction kaempferol + S-adenosyl-L-methionine = kaempferol 7-methyl ether + S-adenosyl-L-homocysteine + H(+). It catalyses the reaction (2S)-naringenin + S-adenosyl-L-methionine = (2S)-sakuranetin + S-adenosyl-L-homocysteine + H(+). The catalysed reaction is quercetin + S-adenosyl-L-methionine = rhamnetin + S-adenosyl-L-homocysteine + H(+). The enzyme catalyses apigenin + S-adenosyl-L-methionine = genkwanin + S-adenosyl-L-homocysteine + H(+). It carries out the reaction luteolin + S-adenosyl-L-methionine = luteolin 7-methyl ether + S-adenosyl-L-homocysteine + H(+). The protein operates within flavonoid metabolism. Flavonoid 7-O-methyltransferase involved in the biosynthesis of polymethoxylated flavonoids natural products such as pebrellin, aroma compounds which contribute to the flavor of peppermint, and exhibit pharmacological activities such as anti-allergic, anti-oxidant, antibacterial, anti-proliferative, and anti-inflammatory effects. Catalyzes S-adenosylmethionine-dependent regioselective 7-O-methylation of flavonoids; active on various hydroxylated flavonoid substrates, including luteolin (LUT), quercetin, kaempferol, isorhamnetin, apigenin (API), scutellarein (6-hydroxy-apigenin, 6-OH-API, SCU), 7,8,4'-trihydroxy-flavone and naringenin (NAR), and, with a lower efficiency, 7,8,3',4'-tetrahydroxy-flavone, taxifolin and hesperetin. This is Flavonoid 7-O-methyltransferase 1B from Mentha piperita (Peppermint).